A 513-amino-acid chain; its full sequence is Serine/threonine-protein kinase ppk8 (513 aa).

A compositionally biased stretch (low complexity) spans 98–114; sequence LSSTLTSMSEESSSTES. The disordered stretch occupies residues 98 to 120; sequence LSSTLTSMSEESSSTESKFATLN. The region spanning 241 to 505 is the Protein kinase domain; it reads GKLNNVIGEG…ISGARSTTWM (265 aa). ATP is bound by residues 247–255 and K270; that span reads IGEGASSFI. D364 serves as the catalytic Proton acceptor.

It belongs to the protein kinase superfamily. Ser/Thr protein kinase family.

It localises to the cytoplasm. It is found in the nucleus. The enzyme catalyses L-seryl-[protein] + ATP = O-phospho-L-seryl-[protein] + ADP + H(+). It catalyses the reaction L-threonyl-[protein] + ATP = O-phospho-L-threonyl-[protein] + ADP + H(+). The polypeptide is Serine/threonine-protein kinase ppk8 (ppk8) (Schizosaccharomyces pombe (strain 972 / ATCC 24843) (Fission yeast)).